The primary structure comprises 389 residues: Trans-2-enoyl-CoA reductase [NADH] (389 aa).

Residues 47 to 52 (GASTGY), 73 to 74 (FE), 110 to 111 (DA), and 138 to 139 (LA) contribute to the NAD(+) site. Tyrosine 224 contacts substrate. The Proton donor role is filled by tyrosine 234. Residues lysine 243 and 272–274 (LVT) each bind NAD(+).

Belongs to the TER reductase family. In terms of assembly, monomer.

It carries out the reaction a 2,3-saturated acyl-CoA + NAD(+) = a (2E)-enoyl-CoA + NADH + H(+). It participates in lipid metabolism; fatty acid biosynthesis. In terms of biological role, involved in the fatty acid synthesis (FAS II). Catalyzes the reduction of a carbon-carbon double bond in an enoyl moiety that is covalently linked to a coenzyme A (CoA). This is Trans-2-enoyl-CoA reductase [NADH] from Clostridium perfringens (strain SM101 / Type A).